The chain runs to 561 residues: Tudor and KH domain-containing protein (561 aa).

2 KH domains span residues 52–115 and 124–190; these read DIEI…KAAI and PVSE…KHLI. Residues lysine 65, lysine 76, lysine 110, lysine 112, lysine 152, lysine 175, lysine 181, lysine 187, lysine 193, lysine 256, and lysine 267 each participate in a glycyl lysine isopeptide (Lys-Gly) (interchain with G-Cter in ubiquitin) cross-link. Residues 219 to 262 form a disordered region; that stretch reads SVRREDMTEPGGAGEPALWKNTSSSMEPTAPLVTPPPKGGGDMA. The residue at position 278 (serine 278) is a Phosphoserine. Residues 353-412 form the Tudor domain; it reads TVHVGDIVAAPLPTNGSWYRARVLGTLENGNLDLYFVDFGDNGDCPLKDLRALRSDFLSL. Glycyl lysine isopeptide (Lys-Gly) (interchain with G-Cter in ubiquitin) cross-links involve residues lysine 479, lysine 510, and lysine 529.

This sequence belongs to the Tdrkh family. In terms of assembly, interacts with (symmetrically methylated) PIWIL1, PIWIL2 and PIWIL4. Post-translationally, ubiquitinated by PRKN during mitophagy, leading to its degradation and enhancement of mitophagy. Deubiquitinated by USP30.

The protein localises to the cytoplasm. Its subcellular location is the mitochondrion. In terms of biological role, participates in the primary piRNA biogenesis pathway and is required during spermatogenesis to repress transposable elements and prevent their mobilization, which is essential for the germline integrity. The piRNA metabolic process mediates the repression of transposable elements during meiosis by forming complexes composed of piRNAs and Piwi proteins and govern the methylation and subsequent repression of transposons. Required for the final steps of primary piRNA biogenesis by participating in the processing of 31-37 nt intermediates into mature piRNAs. May act in pi-bodies and piP-bodies by transferring piRNA precursors or intermediates to or between these granules. This Homo sapiens (Human) protein is Tudor and KH domain-containing protein (TDRKH).